Consider the following 699-residue polypeptide: eEF1A lysine and N-terminal methyltransferase (699 aa).

Residue Met-1 is modified to N-acetylmethionine. Ser-267 is modified (phosphoserine). The disordered stretch occupies residues 433-460 (VSHRAQKKRKKDRKKHRPADTPEDLPAA). The segment covering 436–449 (RAQKKRKKDRKKHR) has biased composition (basic residues).

Belongs to the methyltransferase superfamily. Forms a tripartite complex containing GAB1, METTL13 and SPRY2. Within the complex interacts with GAB1 and SPRY2.

Its subcellular location is the cytoplasm. The protein resides in the nucleus. It localises to the mitochondrion. The enzyme catalyses L-lysyl-[protein] + S-adenosyl-L-methionine = N(6)-methyl-L-lysyl-[protein] + S-adenosyl-L-homocysteine + H(+). It catalyses the reaction N(6)-methyl-L-lysyl-[protein] + S-adenosyl-L-methionine = N(6),N(6)-dimethyl-L-lysyl-[protein] + S-adenosyl-L-homocysteine + H(+). The catalysed reaction is N-terminal glycyl-L-lysyl-L-glutamyl-[protein] + 3 S-adenosyl-L-methionine = N-terminal N,N,N-trimethyl-glycyl-L-lysyl-L-glutamyl-[protein] + 3 S-adenosyl-L-homocysteine + 3 H(+). Dual methyltransferase that catalyzes methylation of elongation factor 1-alpha (EEF1A1 and EEF1A2) at two different positions, and is therefore involved in the regulation of mRNA translation. Via its C-terminus, methylates EEF1A1 and EEF1A2 at the N-terminal residue 'Gly-2'. Via its N-terminus dimethylates EEF1A1 and EEF1A2 at residue 'Lys-55'. Has no activity towards core histones H2A, H2B, H3 and H4. The protein is eEF1A lysine and N-terminal methyltransferase (METTL13) of Bos taurus (Bovine).